A 129-amino-acid polypeptide reads, in one-letter code: 3-aminoacrylate deaminase RutC (129 aa).

The protein belongs to the RutC family.

The catalysed reaction is (Z)-3-aminoacrylate + H2O + H(+) = 3-oxopropanoate + NH4(+). Its function is as follows. Involved in pyrimidine catabolism. Catalyzes the deamination of 3-aminoacrylate to malonic semialdehyde, a reaction that can also occur spontaneously. RutC may facilitate the reaction and modulate the metabolic fitness, rather than catalyzing essential functions. The sequence is that of 3-aminoacrylate deaminase RutC from Caulobacter segnis (strain ATCC 21756 / DSM 7131 / JCM 7823 / NBRC 15250 / LMG 17158 / TK0059) (Mycoplana segnis).